The following is a 296-amino-acid chain: Guided entry of tail-anchored proteins factor CAMLG (296 aa).

The interval 1–79 (MESMAVATDG…SDKLNSLSVP (79 aa)) is disordered. Residues 1–189 (MESMAVATDG…NTTEEFDSFR (189 aa)) are Cytoplasmic-facing. Ser-55 bears the Phosphoserine mark. The span at 61-72 (SQTKSKQQDSDK) shows a compositional bias: basic and acidic residues. Residues 190-207 (IFRLVGCALLALGVRAFV) form a helical membrane-spanning segment. At 208–212 (CKYLS) the chain is on the lumenal side. Cys-208 and Cys-284 form a disulfide bridge. A helical transmembrane segment spans residues 213-231 (IFAPFLTLQLAYMGLYKYF). Over 232-269 (PKSEKKIKTTVLTAALLLSGIPAEVINRSMDTYSKMGE) the chain is Cytoplasmic. The chain crosses the membrane as a helical span at residues 270–288 (VFTDLCVYFFTFIFCHELL). The Lumenal segment spans residues 289–296 (DYWGSEVP).

As to quaternary structure, component of the Golgi to ER traffic (GET) complex, which is composed of GET1/WRB, CAMLG/GET2 and GET3/TRC40. Within the complex, GET1 and CAMLG form a heterotetramer which is stabilized by phosphatidylinositol binding and which binds to the GET3 homodimer. Interacts (via C-terminus) with GET1. Interacts (via N-terminus) with GET3. GET3 shows a higher affinity for CAMLG than for GET1. Interacts (via N-terminus) with TNFRSF13B/TACI (via C-terminus). In terms of assembly, (Microbial infection) Interacts with human herpes virus 8/HHV-8 protein K7; this interaction modulates intracellular calcium concentration. Ubiquitous. Highest levels in brain, testis and ovary.

The protein resides in the endoplasmic reticulum membrane. Required for the post-translational delivery of tail-anchored (TA) proteins to the endoplasmic reticulum. Together with GET1/WRB, acts as a membrane receptor for soluble GET3/TRC40, which recognizes and selectively binds the transmembrane domain of TA proteins in the cytosol. Required for the stability of GET1. Stimulates calcium signaling in T cells through its involvement in elevation of intracellular calcium. Essential for the survival of peripheral follicular B cells. The sequence is that of Guided entry of tail-anchored proteins factor CAMLG from Homo sapiens (Human).